We begin with the raw amino-acid sequence, 156 residues long: Small ribosomal subunit protein uS7c (156 aa).

The protein belongs to the universal ribosomal protein uS7 family. Part of the 30S ribosomal subunit.

Its subcellular location is the plastid. It is found in the chloroplast. One of the primary rRNA binding proteins, it binds directly to 16S rRNA where it nucleates assembly of the head domain of the 30S subunit. This chain is Small ribosomal subunit protein uS7c (rps7), found in Zamia furfuracea (Cardboard cycad).